We begin with the raw amino-acid sequence, 172 residues long: Large ribosomal subunit protein uL10 (172 aa).

This sequence belongs to the universal ribosomal protein uL10 family. Part of the ribosomal stalk of the 50S ribosomal subunit. The N-terminus interacts with L11 and the large rRNA to form the base of the stalk. The C-terminus forms an elongated spine to which L12 dimers bind in a sequential fashion forming a multimeric L10(L12)X complex.

Its function is as follows. Forms part of the ribosomal stalk, playing a central role in the interaction of the ribosome with GTP-bound translation factors. The protein is Large ribosomal subunit protein uL10 of Pelodictyon phaeoclathratiforme (strain DSM 5477 / BU-1).